The chain runs to 389 residues: Cytochrome b (389 aa).

Helical transmembrane passes span 36 to 56 (MGSL…FLAM), 80 to 102 (WLIR…THIA), 117 to 137 (VWTV…LGYC), and 183 to 203 (FFAF…MHMM). The heme b site is built by histidine 86 and histidine 100. Heme b-binding residues include histidine 187 and histidine 201. Histidine 206 serves as a coordination point for a ubiquinone. 4 helical membrane-spanning segments follow: residues 229-249 (FVFK…LFVF), 293-313 (LLGV…PITD), 325-345 (LSKF…IIGM), and 352-372 (FVLI…IIVP).

It belongs to the cytochrome b family. Fungal cytochrome b-c1 complex contains 10 subunits; 3 respiratory subunits, 2 core proteins and 5 low-molecular weight proteins. Cytochrome b-c1 complex is a homodimer. Heme b is required as a cofactor.

The protein resides in the mitochondrion inner membrane. In terms of biological role, component of the ubiquinol-cytochrome c reductase complex (complex III or cytochrome b-c1 complex) that is part of the mitochondrial respiratory chain. The b-c1 complex mediates electron transfer from ubiquinol to cytochrome c. Contributes to the generation of a proton gradient across the mitochondrial membrane that is then used for ATP synthesis. The sequence is that of Cytochrome b (COB) from Vanderwaltozyma polyspora (strain ATCC 22028 / DSM 70294 / BCRC 21397 / CBS 2163 / NBRC 10782 / NRRL Y-8283 / UCD 57-17) (Kluyveromyces polysporus).